Here is a 207-residue protein sequence, read N- to C-terminus: MADS-box protein AGL71 (207 aa).

Positions 1–61 constitute an MADS-box domain; the sequence is MVRGKIEIKK…GRLHEYSSSQ (61 aa). The K-box domain occupies 88–178; the sequence is LQELKMEIDR…LEEVNMHHSS (91 aa).

It is found in the nucleus. In terms of biological role, MADS-box transcription factor that acts with AGL42 and AGL72 in the control of flowering time. Promotes flowering at the shoot apical and axillary meristems. Seems to act through a gibberellin-dependent pathway. Interacts genetically with SOC1 and its expression is directly regulated by SOC1. In Arabidopsis thaliana (Mouse-ear cress), this protein is MADS-box protein AGL71 (AGL71).